A 243-amino-acid polypeptide reads, in one-letter code: Carboxy-S-adenosyl-L-methionine synthase (243 aa).

Residues Tyr35, 68–70, 92–93, and Arg199 each bind S-adenosyl-L-methionine; these read GCS and DN.

Belongs to the class I-like SAM-binding methyltransferase superfamily. Cx-SAM synthase family. Homodimer.

It carries out the reaction prephenate + S-adenosyl-L-methionine = carboxy-S-adenosyl-L-methionine + 3-phenylpyruvate + H2O. Catalyzes the conversion of S-adenosyl-L-methionine (SAM) to carboxy-S-adenosyl-L-methionine (Cx-SAM). This chain is Carboxy-S-adenosyl-L-methionine synthase, found in Helicobacter pylori (strain ATCC 700392 / 26695) (Campylobacter pylori).